Here is a 313-residue protein sequence, read N- to C-terminus: Protoheme IX farnesyltransferase (313 aa).

The next 9 helical transmembrane spans lie at 29–49, 57–77, 101–123, 124–144, 157–177, 185–205, 225–245, 247–267, and 287–307; these read VISLLLWTTVTAMFMAARGWP, LWLLIVVSVAGYMSAGSAGVF, LISSRNAAIFGTTLQVLSFVMLW, VWGTPLAAWMSLAGFVFYVVI, IVIGGAAGCFPPLVGWAAVTG, YLFAIIFFWTPVHFWALALMI, MTVAQIGLYAIYTVVLSLMPV, FGAVSWIYFVSGALLGAWLLW, and AVPLYLYSMLYLALLFLAGAI.

The protein belongs to the UbiA prenyltransferase family. Protoheme IX farnesyltransferase subfamily.

The protein localises to the cell membrane. It catalyses the reaction heme b + (2E,6E)-farnesyl diphosphate + H2O = Fe(II)-heme o + diphosphate. Its pathway is porphyrin-containing compound metabolism; heme O biosynthesis; heme O from protoheme: step 1/1. In terms of biological role, converts heme B (protoheme IX) to heme O by substitution of the vinyl group on carbon 2 of heme B porphyrin ring with a hydroxyethyl farnesyl side group. In Deinococcus radiodurans (strain ATCC 13939 / DSM 20539 / JCM 16871 / CCUG 27074 / LMG 4051 / NBRC 15346 / NCIMB 9279 / VKM B-1422 / R1), this protein is Protoheme IX farnesyltransferase.